A 192-amino-acid polypeptide reads, in one-letter code: T-cell surface glycoprotein CD3 epsilon chain (192 aa).

The first 21 residues, Met1 to Ala21, serve as a signal peptide directing secretion. Topologically, residues Gln22–Asn111 are extracellular. The 72-residue stretch at Gln27–Tyr98 folds into the Ig-like domain. An intrachain disulfide couples Cys43 to Cys84. Residues Leu112–Ser137 form a helical membrane-spanning segment. The Cytoplasmic segment spans residues Lys138–Val192. The interval Pro146–Val192 is disordered. The segment at Gln160–Arg177 is NUMB-binding region. Positions Glu163 to Arg190 constitute an ITAM domain. The tract at residues Arg164–Pro171 is proline-rich sequence. 2 positions are modified to phosphotyrosine: Tyr173 and Tyr184.

As to quaternary structure, the TCR-CD3 complex is composed of a CD3D/CD3E and a CD3G/CD3E heterodimers that preferentially associate with TCRalpha and TCRbeta, respectively, to form TCRalpha/CD3E/CD3G and TCRbeta/CD3G/CD3E trimers. In turn, the hexamer interacts with CD3Z homodimer to form the TCR-CD3 complex. Alternatively, TCRalpha and TCRbeta can be replaced by TCRgamma and TCRdelta. Interacts with CD6. Interacts (via Proline-rich sequence) with NCK1; the interaction is ligand dependent but independent of tyrosine kinase activation. Phosphorylated on Tyr residues after T-cell receptor triggering by LCK in association with CD4/CD8.

The protein resides in the cell membrane. In terms of biological role, part of the TCR-CD3 complex present on T-lymphocyte cell surface that plays an essential role in adaptive immune response. When antigen presenting cells (APCs) activate T-cell receptor (TCR), TCR-mediated signals are transmitted across the cell membrane by the CD3 chains CD3D, CD3E, CD3G and CD3Z. All CD3 chains contain immunoreceptor tyrosine-based activation motifs (ITAMs) in their cytoplasmic domain. Upon TCR engagement, these motifs become phosphorylated by Src family protein tyrosine kinases LCK and FYN, resulting in the activation of downstream signaling pathways. In addition of this role of signal transduction in T-cell activation, CD3E plays an essential role in correct T-cell development. Also participates in internalization and cell surface down-regulation of TCR-CD3 complexes via endocytosis sequences present in CD3E cytosolic region. In addition to its role as a TCR coreceptor, it serves as a receptor for ITPRIPL1. Ligand recognition inhibits T-cell activation by promoting interaction with NCK1, which prevents CD3E-ZAP70 interaction and blocks the ERK-NFkB signaling cascade and calcium influx. The chain is T-cell surface glycoprotein CD3 epsilon chain (CD3E) from Ovis aries (Sheep).